Here is a 279-residue protein sequence, read N- to C-terminus: DegV domain-containing protein M6_Spy1246 (279 aa).

The region spanning 4-278 (IKIVTDSSIT…EGAFAVMVRY (275 aa)) is the DegV domain. Hexadecanoate-binding residues include Thr-62 and Ser-95.

May bind long-chain fatty acids, such as palmitate, and may play a role in lipid transport or fatty acid metabolism. The protein is DegV domain-containing protein M6_Spy1246 of Streptococcus pyogenes serotype M6 (strain ATCC BAA-946 / MGAS10394).